A 171-amino-acid chain; its full sequence is UPF0312 protein MW2606 (171 aa).

Belongs to the UPF0312 family.

This chain is UPF0312 protein MW2606, found in Staphylococcus aureus (strain MW2).